Reading from the N-terminus, the 316-residue chain is Aspartate carbamoyltransferase catalytic subunit (316 aa).

Carbamoyl phosphate is bound by residues R56 and T57. K84 serves as a coordination point for L-aspartate. Residues R106, H139, and Q142 each coordinate carbamoyl phosphate. L-aspartate-binding residues include R172 and R226. Positions 267 and 268 each coordinate carbamoyl phosphate.

Belongs to the aspartate/ornithine carbamoyltransferase superfamily. ATCase family. As to quaternary structure, heterododecamer (2C3:3R2) of six catalytic PyrB chains organized as two trimers (C3), and six regulatory PyrI chains organized as three dimers (R2).

It carries out the reaction carbamoyl phosphate + L-aspartate = N-carbamoyl-L-aspartate + phosphate + H(+). It participates in pyrimidine metabolism; UMP biosynthesis via de novo pathway; (S)-dihydroorotate from bicarbonate: step 2/3. Catalyzes the condensation of carbamoyl phosphate and aspartate to form carbamoyl aspartate and inorganic phosphate, the committed step in the de novo pyrimidine nucleotide biosynthesis pathway. The polypeptide is Aspartate carbamoyltransferase catalytic subunit (Mycobacterium sp. (strain MCS)).